The primary structure comprises 226 residues: Ribonuclease 3 (226 aa).

The region spanning threonine 5–glycine 127 is the RNase III domain. Glutamate 40 contributes to the Mg(2+) binding site. The active site involves aspartate 44. Mg(2+) contacts are provided by aspartate 113 and glutamate 116. Glutamate 116 is an active-site residue. The 71-residue stretch at aspartate 154–serine 224 folds into the DRBM domain.

Belongs to the ribonuclease III family. In terms of assembly, homodimer. Mg(2+) serves as cofactor.

It localises to the cytoplasm. The catalysed reaction is Endonucleolytic cleavage to 5'-phosphomonoester.. Its function is as follows. Digests double-stranded RNA. Involved in the processing of primary rRNA transcript to yield the immediate precursors to the large and small rRNAs (23S and 16S). Processes some mRNAs, and tRNAs when they are encoded in the rRNA operon. Processes pre-crRNA and tracrRNA of type II CRISPR loci if present in the organism. The polypeptide is Ribonuclease 3 (Xanthomonas axonopodis pv. citri (strain 306)).